A 375-amino-acid chain; its full sequence is Probable pectin lyase D (375 aa).

Residues 1 to 19 form the signal peptide; sequence MKYAAVLTTVAALASRALG. 2 cysteine pairs are disulfide-bonded: Cys-82–Cys-101 and Cys-91–Cys-225. N-linked (GlcNAc...) asparagine glycosylation occurs at Asn-128. Residue Arg-255 is part of the active site. Cys-321 and Cys-329 are disulfide-bonded.

The protein belongs to the polysaccharide lyase 1 family.

The protein localises to the secreted. It catalyses the reaction Eliminative cleavage of (1-&gt;4)-alpha-D-galacturonan methyl ester to give oligosaccharides with 4-deoxy-6-O-methyl-alpha-D-galact-4-enuronosyl groups at their non-reducing ends.. Pectinolytic enzymes consist of four classes of enzymes: pectin lyase, polygalacturonase, pectin methylesterase and rhamnogalacturonase. Among pectinolytic enzymes, pectin lyase is the most important in depolymerization of pectin, since it cleaves internal glycosidic bonds of highly methylated pectins. This is Probable pectin lyase D (pelD) from Aspergillus flavus (strain ATCC 200026 / FGSC A1120 / IAM 13836 / NRRL 3357 / JCM 12722 / SRRC 167).